Consider the following 423-residue polypeptide: CinA-like protein (423 aa).

The protein belongs to the CinA family.

This Prochlorococcus marinus (strain SARG / CCMP1375 / SS120) protein is CinA-like protein.